The chain runs to 411 residues: S-adenosylmethionine synthase (411 aa).

Residue H15 coordinates ATP. Position 17 (D17) interacts with Mg(2+). K(+) is bound at residue E43. E56 and Q99 together coordinate L-methionine. The tract at residues 99–109 is flexible loop; sequence QSQEIAQGVDT. Residues 179–181, D260, 266–267, A283, and K287 contribute to the ATP site; these read DGK and RK. D260 lines the L-methionine pocket. An L-methionine-binding site is contributed by K291.

Belongs to the AdoMet synthase family. Homotetramer; dimer of dimers. Mg(2+) is required as a cofactor. It depends on K(+) as a cofactor.

The protein localises to the cytoplasm. It carries out the reaction L-methionine + ATP + H2O = S-adenosyl-L-methionine + phosphate + diphosphate. The protein operates within amino-acid biosynthesis; S-adenosyl-L-methionine biosynthesis; S-adenosyl-L-methionine from L-methionine: step 1/1. Its function is as follows. Catalyzes the formation of S-adenosylmethionine (AdoMet) from methionine and ATP. The overall synthetic reaction is composed of two sequential steps, AdoMet formation and the subsequent tripolyphosphate hydrolysis which occurs prior to release of AdoMet from the enzyme. This is S-adenosylmethionine synthase from Corynebacterium jeikeium (strain K411).